The following is a 200-amino-acid chain: Histone H1 (200 aa).

Residues 1–14 show a composition bias toward low complexity; it reads MPPKKAPTTAKKAA. Disordered stretches follow at residues 1-20 and 78-200; these read MPPK…PTHT and DFIQ…NKKA. The region spanning 18 to 93 is the H15 domain; sequence THTSYRDMIK…GTSGPVKLAK (76 aa). The span at 94 to 116 shows a compositional bias: low complexity; it reads KQAPAKPAPKKPATTTKTAAPKK. Basic and acidic residues predominate over residues 120–131; that stretch reads KKADKAEKAEKP. Positions 159 to 185 are enriched in low complexity; the sequence is TAAPAVVDKPKVVSVTKSGRKTTTTAK.

The protein belongs to the histone H1/H5 family.

It localises to the nucleus. The protein resides in the chromosome. Could act as an H1-type linker histone. The polypeptide is Histone H1 (hhoA) (Emericella nidulans (strain FGSC A4 / ATCC 38163 / CBS 112.46 / NRRL 194 / M139) (Aspergillus nidulans)).